A 285-amino-acid chain; its full sequence is Undecaprenyl-diphosphatase 2 (285 aa).

8 consecutive transmembrane segments (helical) span residues 5–25, 47–67, 86–106, 122–142, 156–176, 198–218, 235–255, and 265–285; these read MDLL…LLPV, MTFL…VYFW, WYVL…QSLI, LFSN…LIIL, LPSA…RGFS, FSFA…LVRL, SLLL…LLAL, and GRWY…LTLA.

Belongs to the UppP family.

Its subcellular location is the cell inner membrane. It carries out the reaction di-trans,octa-cis-undecaprenyl diphosphate + H2O = di-trans,octa-cis-undecaprenyl phosphate + phosphate + H(+). In terms of biological role, catalyzes the dephosphorylation of undecaprenyl diphosphate (UPP). Confers resistance to bacitracin. The protein is Undecaprenyl-diphosphatase 2 of Acinetobacter baylyi (strain ATCC 33305 / BD413 / ADP1).